Reading from the N-terminus, the 66-residue chain is Large ribosomal subunit protein bL35 (66 aa).

The span at 1–14 (MPKMKTKSAAKKRF) shows a compositional bias: basic residues. Positions 1–34 (MPKMKTKSAAKKRFSMTATGKVKAGPAGKRHGMI) are disordered.

It belongs to the bacterial ribosomal protein bL35 family.

The chain is Large ribosomal subunit protein bL35 from Paracoccus denitrificans (strain Pd 1222).